Reading from the N-terminus, the 329-residue chain is Taste receptor type 2 member 102 (329 aa).

Over 1 to 9 the chain is Extracellular; sequence MNMESVLHN. A helical membrane pass occupies residues 10-30; it reads FATVLIYVEFIFGNLSNGFIV. Topologically, residues 31–47 are cytoplasmic; it reads LSNFLDWVIKQKLSLID. A helical transmembrane segment spans residues 48-68; it reads KILLTLAISRITLIWEIYAWF. Residues 69–85 lie on the Extracellular side of the membrane; it reads KSLYDPSSFLIGIEFQI. A helical membrane pass occupies residues 86–108; that stretch reads IYFSWVLSSHFSLWLATTLSVFY. Topologically, residues 109 to 129 are cytoplasmic; sequence LLRIANCSWQIFLYLKWRLKQ. Residues 130-150 form a helical membrane-spanning segment; sequence LIVGMLLGSLVFLLGNLMQSM. The Extracellular portion of the chain corresponds to 151–181; it reads LEERFYQYGRNTSVNTMSNDLAMWTELIFFN. Asn-161 carries an N-linked (GlcNAc...) asparagine glycan. The chain crosses the membrane as a helical span at residues 182 to 202; that stretch reads MAMFSVIPFTLALISFLLLIF. Topologically, residues 203 to 231 are cytoplasmic; sequence SLWKHLQKMQLISRRHRDPSTKAHMNALR. The chain crosses the membrane as a helical span at residues 232-252; sequence IMVSFLLLYTMHFLSLLISWI. At 253–262 the chain is on the extracellular side; the sequence is AQKHQSELAD. Residues 263–283 traverse the membrane as a helical segment; the sequence is IIGMITELMYPSVHSCILILG. Over 284–329 the chain is Cytoplasmic; sequence NSKLKQTSLCMLRHLRCRLKGENITIAYSNQITSFCVFCVANKSMR.

This sequence belongs to the G-protein coupled receptor T2R family.

Its subcellular location is the membrane. Functionally, putative taste receptor which may play a role in the perception of bitterness. In Mus musculus (Mouse), this protein is Taste receptor type 2 member 102.